Reading from the N-terminus, the 460-residue chain is Proline--tRNA ligase (460 aa).

Belongs to the class-II aminoacyl-tRNA synthetase family. ProS type 3 subfamily. As to quaternary structure, homodimer.

It is found in the cytoplasm. The catalysed reaction is tRNA(Pro) + L-proline + ATP = L-prolyl-tRNA(Pro) + AMP + diphosphate. In terms of biological role, catalyzes the attachment of proline to tRNA(Pro) in a two-step reaction: proline is first activated by ATP to form Pro-AMP and then transferred to the acceptor end of tRNA(Pro). This is Proline--tRNA ligase from Methanococcus maripaludis (strain C5 / ATCC BAA-1333).